The chain runs to 333 residues: Polygalacturonase inhibitor (333 aa).

The N-terminal stretch at 1 to 27 is a signal peptide; the sequence is METSKLFLLSSSLLLVLLATRPCPSLS. Cystine bridges form between C30-C60 and C61-C68. 10 LRR repeats span residues 72 to 96, 97 to 120, 121 to 144, 145 to 169, 170 to 192, 194 to 220, 221 to 240, 241 to 263, 264 to 288, and 290 to 312; these read THRINSLTIFSGQLSGQIPDAVGDL, PFLETLIFRKLSNLTGQIPPAIAK, LKHLKMVRLSWTNLSGPVPAFFSE, LKNLTYLDLSFNNLSGPIPGSLSLL, PNLGALHLDRNHLTGPIPDSFGK, AGSTPGLHLSHNQLSGKIPYSFRGFDP, NVMDLSRNKLEGDLSIFFNA, NKSTQIVDFSRNLFQFDLSRVEF, PKSLTSLDLSHNKIAGSLPEMMTSL, and LQFLNVSYNRLCGKIPVGGKLQS. N-linked (GlcNAc...) asparagine glycans are attached at residues N109, N133, N147, and N157. N-linked (GlcNAc...) asparagine glycosylation is present at N241. Residue N294 is glycosylated (N-linked (GlcNAc...) asparagine). Disulfide bonds link C301–C323 and C325–C332.

It belongs to the polygalacturonase-inhibiting protein family.

It is found in the secreted. Its subcellular location is the cell wall. The protein localises to the membrane. Functionally, inhibitor of fungal polygalacturonase. It is an important factor for plant resistance to phytopathogenic fungi. The sequence is that of Polygalacturonase inhibitor (pgip) from Vitis vinifera (Grape).